Consider the following 192-residue polypeptide: Imidazoleglycerol-phosphate dehydratase (192 aa).

This sequence belongs to the imidazoleglycerol-phosphate dehydratase family.

The protein localises to the cytoplasm. The catalysed reaction is D-erythro-1-(imidazol-4-yl)glycerol 3-phosphate = 3-(imidazol-4-yl)-2-oxopropyl phosphate + H2O. It participates in amino-acid biosynthesis; L-histidine biosynthesis; L-histidine from 5-phospho-alpha-D-ribose 1-diphosphate: step 6/9. The polypeptide is Imidazoleglycerol-phosphate dehydratase (Clostridioides difficile (strain 630) (Peptoclostridium difficile)).